The following is a 394-amino-acid chain: NAD(P)H-quinone oxidoreductase subunit H (394 aa).

The protein belongs to the complex I 49 kDa subunit family. NDH-1 can be composed of about 15 different subunits; different subcomplexes with different compositions have been identified which probably have different functions.

The protein localises to the cellular thylakoid membrane. It carries out the reaction a plastoquinone + NADH + (n+1) H(+)(in) = a plastoquinol + NAD(+) + n H(+)(out). The catalysed reaction is a plastoquinone + NADPH + (n+1) H(+)(in) = a plastoquinol + NADP(+) + n H(+)(out). Its function is as follows. NDH-1 shuttles electrons from an unknown electron donor, via FMN and iron-sulfur (Fe-S) centers, to quinones in the respiratory and/or the photosynthetic chain. The immediate electron acceptor for the enzyme in this species is believed to be plastoquinone. Couples the redox reaction to proton translocation, and thus conserves the redox energy in a proton gradient. Cyanobacterial NDH-1 also plays a role in inorganic carbon-concentration. This chain is NAD(P)H-quinone oxidoreductase subunit H, found in Synechococcus sp. (strain CC9605).